The chain runs to 29 residues: Dermaseptin-J8 (29 aa).

In terms of tissue distribution, expressed by the skin glands.

The protein localises to the secreted. In terms of biological role, has antimicrobial activity. The polypeptide is Dermaseptin-J8 (Phasmahyla jandaia (Jandaia leaf frog)).